Reading from the N-terminus, the 142-residue chain is Large ribosomal subunit protein uL11 (142 aa).

This sequence belongs to the universal ribosomal protein uL11 family. As to quaternary structure, part of the ribosomal stalk of the 50S ribosomal subunit. Interacts with L10 and the large rRNA to form the base of the stalk. L10 forms an elongated spine to which L12 dimers bind in a sequential fashion forming a multimeric L10(L12)X complex. One or more lysine residues are methylated.

Its function is as follows. Forms part of the ribosomal stalk which helps the ribosome interact with GTP-bound translation factors. In Ruthia magnifica subsp. Calyptogena magnifica, this protein is Large ribosomal subunit protein uL11.